A 477-amino-acid polypeptide reads, in one-letter code: Bifunctional protein HldE (477 aa).

A ribokinase region spans residues 1 to 318; it reads MKVTLPEFER…ENAVRGRADT (318 aa). Lysine 179 carries the N6-acetyllysine modification. Residue 195–198 coordinates ATP; it reads NLSE. Aspartate 264 is an active-site residue. Residues 344 to 477 form a cytidylyltransferase region; it reads MTNGVFDILH…IKKIQQDKKG (134 aa).

This sequence in the N-terminal section; belongs to the carbohydrate kinase PfkB family. The protein in the C-terminal section; belongs to the cytidylyltransferase family. As to quaternary structure, homodimer.

The enzyme catalyses D-glycero-beta-D-manno-heptose 7-phosphate + ATP = D-glycero-beta-D-manno-heptose 1,7-bisphosphate + ADP + H(+). It catalyses the reaction D-glycero-beta-D-manno-heptose 1-phosphate + ATP + H(+) = ADP-D-glycero-beta-D-manno-heptose + diphosphate. The protein operates within nucleotide-sugar biosynthesis; ADP-L-glycero-beta-D-manno-heptose biosynthesis; ADP-L-glycero-beta-D-manno-heptose from D-glycero-beta-D-manno-heptose 7-phosphate: step 1/4. It participates in nucleotide-sugar biosynthesis; ADP-L-glycero-beta-D-manno-heptose biosynthesis; ADP-L-glycero-beta-D-manno-heptose from D-glycero-beta-D-manno-heptose 7-phosphate: step 3/4. Its function is as follows. Catalyzes the phosphorylation of D-glycero-D-manno-heptose 7-phosphate at the C-1 position to selectively form D-glycero-beta-D-manno-heptose-1,7-bisphosphate. In terms of biological role, catalyzes the ADP transfer from ATP to D-glycero-beta-D-manno-heptose 1-phosphate, yielding ADP-D-glycero-beta-D-manno-heptose. This chain is Bifunctional protein HldE, found in Escherichia coli O17:K52:H18 (strain UMN026 / ExPEC).